We begin with the raw amino-acid sequence, 468 residues long: Glutamate--tRNA ligase (468 aa).

A 'HIGH' region motif is present at residues 9 to 19; the sequence is PSPTGYLHVGG. The Zn(2+) site is built by Cys-98, Cys-100, Cys-125, and Asp-127. The short motif at 235–239 is the 'KMSKS' region element; it reads KLSKR. ATP is bound at residue Lys-238.

Belongs to the class-I aminoacyl-tRNA synthetase family. Glutamate--tRNA ligase type 1 subfamily. In terms of assembly, monomer. Requires Zn(2+) as cofactor.

It localises to the cytoplasm. The enzyme catalyses tRNA(Glu) + L-glutamate + ATP = L-glutamyl-tRNA(Glu) + AMP + diphosphate. In terms of biological role, catalyzes the attachment of glutamate to tRNA(Glu) in a two-step reaction: glutamate is first activated by ATP to form Glu-AMP and then transferred to the acceptor end of tRNA(Glu). In Idiomarina loihiensis (strain ATCC BAA-735 / DSM 15497 / L2-TR), this protein is Glutamate--tRNA ligase.